The sequence spans 251 residues: MEWSEPAIVLSVAAFGESDLRTIVLAETHGAWHGLARGGAGRRGAPIWQEGNLINARWVARLPEQLGSISGELVHPAAAIAMADPLALAVLRAACAVAAGALPEREAHRGAFIRLARLLGGIGIAGTALPALVRFELELLRELGYGLDLSSCALSGAAEDLAFVSPRTGRAVARGAAGDWVPRLLKLPAFLLDEDAADDKADLAACRDGLALTGHFLARDAFGARHAPLPTARLDLYDRLTRRLNGDDDAR.

It belongs to the RecO family.

In terms of biological role, involved in DNA repair and RecF pathway recombination. This chain is DNA repair protein RecO, found in Acidiphilium cryptum (strain JF-5).